We begin with the raw amino-acid sequence, 158 residues long: Auxin-responsive protein IAA31 (158 aa).

Positions 1–40 are enriched in low complexity; the sequence is MEVSNSCSSFSSSSVDSTKPSPSESSVNLSLSLTFPSTSP. The interval 1-49 is disordered; it reads MEVSNSCSSFSSSSVDSTKPSPSESSVNLSLSLTFPSTSPQREARQDWP. An EAR-like (transcriptional repression) motif is present at residues 29–33; sequence LSLSL. The PB1 domain occupies 72–157; it reads SLFVKVYMEG…RRLKITRPER (86 aa).

It belongs to the Aux/IAA family. In terms of assembly, homodimers and heterodimers.

It localises to the nucleus. In terms of biological role, aux/IAA proteins are short-lived transcriptional factors that function as repressors of early auxin response genes at low auxin concentrations. Repression is thought to result from the interaction with auxin response factors (ARFs), proteins that bind to the auxin-responsive promoter element (AuxRE). Formation of heterodimers with ARF proteins may alter their ability to modulate early auxin response genes expression. The polypeptide is Auxin-responsive protein IAA31 (IAA31) (Arabidopsis thaliana (Mouse-ear cress)).